A 231-amino-acid chain; its full sequence is Flagellar L-ring protein 2 (231 aa).

The first 15 residues, 1–15 (MKNLILILPLLMLTG), serve as a signal peptide directing secretion. Cys-16 carries the N-palmitoyl cysteine lipid modification. Cys-16 carries the S-diacylglycerol cysteine lipid modification. The interval 30–54 (SPVGSGLRTQADPIPVTPRMRTPVS) is disordered.

It belongs to the FlgH family. In terms of assembly, the basal body constitutes a major portion of the flagellar organelle and consists of four rings (L,P,S, and M) mounted on a central rod.

The protein localises to the cell outer membrane. Its subcellular location is the bacterial flagellum basal body. Its function is as follows. Assembles around the rod to form the L-ring and probably protects the motor/basal body from shearing forces during rotation. This is Flagellar L-ring protein 2 from Bradyrhizobium diazoefficiens (strain JCM 10833 / BCRC 13528 / IAM 13628 / NBRC 14792 / USDA 110).